Here is a 176-residue protein sequence, read N- to C-terminus: NAD(P)H-quinone oxidoreductase subunit 6, chloroplastic (176 aa).

A run of 5 helical transmembrane segments spans residues 10-30 (FLLV…VLLP), 33-53 (IFSA…YILA), 61-81 (AQLL…VMFM), 92-112 (LWTV…FSLI), and 152-172 (FFLP…GAIS).

Belongs to the complex I subunit 6 family. In terms of assembly, NDH is composed of at least 16 different subunits, 5 of which are encoded in the nucleus.

Its subcellular location is the plastid. It localises to the chloroplast thylakoid membrane. The catalysed reaction is a plastoquinone + NADH + (n+1) H(+)(in) = a plastoquinol + NAD(+) + n H(+)(out). It carries out the reaction a plastoquinone + NADPH + (n+1) H(+)(in) = a plastoquinol + NADP(+) + n H(+)(out). Functionally, NDH shuttles electrons from NAD(P)H:plastoquinone, via FMN and iron-sulfur (Fe-S) centers, to quinones in the photosynthetic chain and possibly in a chloroplast respiratory chain. The immediate electron acceptor for the enzyme in this species is believed to be plastoquinone. Couples the redox reaction to proton translocation, and thus conserves the redox energy in a proton gradient. The protein is NAD(P)H-quinone oxidoreductase subunit 6, chloroplastic (ndhG) of Arabis hirsuta (Hairy rock-cress).